Here is a 489-residue protein sequence, read N- to C-terminus: CBL-interacting serine/threonine-protein kinase 12 (489 aa).

The Protein kinase domain maps to 26 to 280; it reads YEMGKLLGHG…FPEIMENSWF (255 aa). ATP is bound by residues 32-40 and K55; that span reads LGHGTFAKV. Catalysis depends on D148, which acts as the Proton acceptor. Residues 166 to 195 form an activation loop region; it reads DFGLSAVSDQIRQDGLFHTFCGTPAYVAPE. At S170 the chain carries Phosphoserine. T184 carries the phosphothreonine modification. Residues 336–360 form the NAF domain; the sequence is PRPASLNAFDIISFSQGFDLSGLFD. The interval 363-392 is PPI; the sequence is GEGSRFVSGAPVSKIISKLEEIAKVVSFTV.

The protein belongs to the protein kinase superfamily. CAMK Ser/Thr protein kinase family. SNF1 subfamily. As to quaternary structure, interacts with CBL2 and CBL3. Mn(2+) serves as cofactor. As to expression, expressed in roots and shoots.

The catalysed reaction is L-seryl-[protein] + ATP = O-phospho-L-seryl-[protein] + ADP + H(+). It carries out the reaction L-threonyl-[protein] + ATP = O-phospho-L-threonyl-[protein] + ADP + H(+). Its function is as follows. CIPK serine-threonine protein kinases interact with CBL proteins. Binding of a CBL protein to the regulatory NAF domain of CIPK protein lead to the activation of the kinase in a calcium-dependent manner. The protein is CBL-interacting serine/threonine-protein kinase 12 (CIPK12) of Arabidopsis thaliana (Mouse-ear cress).